A 101-amino-acid chain; its full sequence is Small ribosomal subunit protein uS14 (101 aa).

The tract at residues 1–26 is disordered; the sequence is MAKVSSIKKNESRKKKSQSLHNKRSA. The segment covering 11-26 has biased composition (basic residues); sequence ESRKKKSQSLHNKRSA.

Belongs to the universal ribosomal protein uS14 family. As to quaternary structure, part of the 30S ribosomal subunit. Contacts proteins S3 and S10.

Binds 16S rRNA, required for the assembly of 30S particles and may also be responsible for determining the conformation of the 16S rRNA at the A site. This chain is Small ribosomal subunit protein uS14, found in Rickettsia felis (strain ATCC VR-1525 / URRWXCal2) (Rickettsia azadi).